Reading from the N-terminus, the 611-residue chain is Probable potassium transport system protein Kup 1 (611 aa).

Transmembrane regions (helical) follow at residues 6–26 (LMVG…LYTM), 44–64 (MLSL…VAVV), 90–110 (LGVI…GAIT), 129–149 (ISPY…ALQA), 158–178 (LFGP…LFGI), 193–213 (GLSY…AVFL), 237–257 (WYGL…AVVV), 280–300 (LVAL…SGAF), 328–348 (IYIG…TLGF), 354–374 (LAAA…ILMF), 385–405 (LAAS…FVSA), and 410–430 (VLEG…LMMT).

Belongs to the HAK/KUP transporter (TC 2.A.72) family.

The protein resides in the cell inner membrane. It carries out the reaction K(+)(in) + H(+)(in) = K(+)(out) + H(+)(out). In terms of biological role, transport of potassium into the cell. Likely operates as a K(+):H(+) symporter. The chain is Probable potassium transport system protein Kup 1 from Bradyrhizobium sp. (strain BTAi1 / ATCC BAA-1182).